The chain runs to 429 residues: Adenylosuccinate synthetase (429 aa).

GTP-binding positions include 12 to 18 (GDEGKGK) and 40 to 42 (GHT). Catalysis depends on Asp13, which acts as the Proton acceptor. Mg(2+)-binding residues include Asp13 and Gly40. Residues 13–16 (DEGK), 38–41 (NAGH), Thr128, Arg142, Gln223, Thr238, and Arg302 contribute to the IMP site. The active-site Proton donor is His41. Substrate is bound at residue 298–304 (VNTGRKR). Residues Arg304, 330 to 332 (KLD), and 412 to 414 (GVG) each bind GTP.

Belongs to the adenylosuccinate synthetase family. As to quaternary structure, homodimer. Mg(2+) serves as cofactor.

It is found in the cytoplasm. It catalyses the reaction IMP + L-aspartate + GTP = N(6)-(1,2-dicarboxyethyl)-AMP + GDP + phosphate + 2 H(+). Its pathway is purine metabolism; AMP biosynthesis via de novo pathway; AMP from IMP: step 1/2. Plays an important role in the de novo pathway of purine nucleotide biosynthesis. Catalyzes the first committed step in the biosynthesis of AMP from IMP. The protein is Adenylosuccinate synthetase of Corynebacterium jeikeium (strain K411).